Consider the following 86-residue polypeptide: MNFQPLGKRVLVKRVEETKTTASGIIIPDNAKEKPLMGEVVAVSKEITDIANGDKIVFAKYGGTEIKLDNNEYLVLNLDDILGILK.

It belongs to the GroES chaperonin family. As to quaternary structure, heptamer of 7 subunits arranged in a ring. Interacts with the chaperonin GroEL.

The protein localises to the cytoplasm. In terms of biological role, together with the chaperonin GroEL, plays an essential role in assisting protein folding. The GroEL-GroES system forms a nano-cage that allows encapsulation of the non-native substrate proteins and provides a physical environment optimized to promote and accelerate protein folding. GroES binds to the apical surface of the GroEL ring, thereby capping the opening of the GroEL channel. In Campylobacter jejuni subsp. jejuni serotype O:6 (strain 81116 / NCTC 11828), this protein is Co-chaperonin GroES.